A 364-amino-acid chain; its full sequence is 4-hydroxythreonine-4-phosphate dehydrogenase (364 aa).

The substrate site is built by His-148 and Thr-149. A divalent metal cation is bound by residues His-177, His-216, and His-301. Lys-309, Asn-318, and Arg-327 together coordinate substrate.

It belongs to the PdxA family. As to quaternary structure, homodimer. It depends on Zn(2+) as a cofactor. Mg(2+) serves as cofactor. The cofactor is Co(2+).

Its subcellular location is the cytoplasm. The enzyme catalyses 4-(phosphooxy)-L-threonine + NAD(+) = 3-amino-2-oxopropyl phosphate + CO2 + NADH. The protein operates within cofactor biosynthesis; pyridoxine 5'-phosphate biosynthesis; pyridoxine 5'-phosphate from D-erythrose 4-phosphate: step 4/5. Catalyzes the NAD(P)-dependent oxidation of 4-(phosphooxy)-L-threonine (HTP) into 2-amino-3-oxo-4-(phosphooxy)butyric acid which spontaneously decarboxylates to form 3-amino-2-oxopropyl phosphate (AHAP). The polypeptide is 4-hydroxythreonine-4-phosphate dehydrogenase (Campylobacter jejuni subsp. jejuni serotype O:2 (strain ATCC 700819 / NCTC 11168)).